We begin with the raw amino-acid sequence, 188 residues long: Ribosome-recycling factor (188 aa).

The protein belongs to the RRF family.

Its subcellular location is the cytoplasm. In terms of biological role, responsible for the release of ribosomes from messenger RNA at the termination of protein biosynthesis. May increase the efficiency of translation by recycling ribosomes from one round of translation to another. The sequence is that of Ribosome-recycling factor from Bradyrhizobium diazoefficiens (strain JCM 10833 / BCRC 13528 / IAM 13628 / NBRC 14792 / USDA 110).